The chain runs to 49 residues: Osteocalcin (49 aa).

In terms of domain architecture, Gla spans 1–47 (YLDSGLGAPVPYPDPLEPKREVCELNPNCDELADHIGFQEAYQRFYG). 4 residues coordinate Ca(2+): E17, E21, E24, and D30. A 4-carboxyglutamate mark is found at E17, E21, and E24. Residues C23 and C29 are joined by a disulfide bond.

Belongs to the osteocalcin/matrix Gla protein family. Gamma-carboxyglutamate residues are formed by vitamin K dependent carboxylation by GGCX. These residues are essential for the binding of calcium. Decarboxylation promotes the hormone activity.

The protein resides in the secreted. Its function is as follows. The carboxylated form is one of the main organic components of the bone matrix, which constitutes 1-2% of the total bone protein. It acts as a negative regulator of bone formation and is required to limit bone formation without impairing bone resorption or mineralization. The carboxylated form binds strongly to apatite and calcium. Functionally, the uncarboxylated form acts as a hormone secreted by osteoblasts, which regulates different cellular processes, such as energy metabolism, male fertility and brain development. Regulates of energy metabolism by acting as a hormone favoring pancreatic beta-cell proliferation, insulin secretion and sensitivity and energy expenditure. Uncarboxylated osteocalcin hormone also promotes testosterone production in the testes: acts as a ligand for G protein-coupled receptor GPRC6A at the surface of Leydig cells, initiating a signaling response that promotes the expression of enzymes required for testosterone synthesis in a CREB-dependent manner. Also acts as a regulator of brain development: osteocalcin hormone crosses the blood-brain barrier and acts as a ligand for GPR158 on neurons, initiating a signaling response that prevents neuronal apoptosis in the hippocampus, favors the synthesis of all monoamine neurotransmitters and inhibits that of gamma-aminobutyric acid (GABA). Osteocalcin also crosses the placenta during pregnancy and maternal osteocalcin is required for fetal brain development. The protein is Osteocalcin (BGLAP) of Canis lupus familiaris (Dog).